The chain runs to 120 residues: MFLLYEYDLFWAFLIISSLIPILAFFISGVLAPISKGPEKLSTYESGIEPMGDAWLQFRIRYYMFALVFVVFDVETVFLYPWAMSFDVLGVSVFIEAFIFVLILIGGLVYAWRKGALEWS.

3 consecutive transmembrane segments (helical) span residues 10–30 (FWAF…ISGV), 64–84 (MFAL…PWAM), and 88–108 (VLGV…IGGL).

The protein belongs to the complex I subunit 3 family. As to quaternary structure, NDH is composed of at least 16 different subunits, 5 of which are encoded in the nucleus.

It is found in the plastid. The protein localises to the chloroplast thylakoid membrane. It carries out the reaction a plastoquinone + NADH + (n+1) H(+)(in) = a plastoquinol + NAD(+) + n H(+)(out). The catalysed reaction is a plastoquinone + NADPH + (n+1) H(+)(in) = a plastoquinol + NADP(+) + n H(+)(out). Its function is as follows. NDH shuttles electrons from NAD(P)H:plastoquinone, via FMN and iron-sulfur (Fe-S) centers, to quinones in the photosynthetic chain and possibly in a chloroplast respiratory chain. The immediate electron acceptor for the enzyme in this species is believed to be plastoquinone. Couples the redox reaction to proton translocation, and thus conserves the redox energy in a proton gradient. The protein is NAD(P)H-quinone oxidoreductase subunit 3, chloroplastic of Ipomoea purpurea (Common morning glory).